We begin with the raw amino-acid sequence, 591 residues long: Proteasome-associated ATPase (591 aa).

Residues 10–77 are a coiled coil; the sequence is VAAAEELHAL…LREEVDRLGQ (68 aa). 278–283 provides a ligand contact to ATP; that stretch reads GCGKTL. The interval 590 to 591 is docks into pockets in the proteasome alpha-ring; that stretch reads YL.

This sequence belongs to the AAA ATPase family. Homohexamer. Assembles into a hexameric ring structure that likely caps the 20S proteasome core. Can form a complex composed of two stacked hexameric rings in vitro. Probably interacts with the prokaryotic ubiquitin-like protein Pup through a hydrophobic interface; the expected interacting region of ARC lies in its N-terminal coiled-coil domain. There is likely one Pup binding site per ARC hexamer ring. Upon ATP-binding, the C-terminus of ARC probably interacts with the alpha-rings of the proteasome core, possibly by binding to the intersubunit pockets.

It participates in protein degradation; proteasomal Pup-dependent pathway. ATPase activity is inhibited by N-ethylmaleimide (NEM) but not by sodium azide. In terms of biological role, ATPase which is responsible for recognizing, binding, unfolding and translocation of pupylated proteins into the bacterial 20S proteasome core particle. May be essential for opening the gate of the 20S proteasome via an interaction with its C-terminus, thereby allowing substrate entry and access to the site of proteolysis. Thus, the C-termini of the proteasomal ATPase may function like a 'key in a lock' to induce gate opening and therefore regulate proteolysis. This chain is Proteasome-associated ATPase, found in Rhodococcus erythropolis (Arthrobacter picolinophilus).